Reading from the N-terminus, the 308-residue chain is Porphobilinogen deaminase (308 aa).

An S-(dipyrrolylmethanemethyl)cysteine modification is found at Cys-241.

It belongs to the HMBS family. In terms of assembly, monomer. The cofactor is dipyrromethane.

It carries out the reaction 4 porphobilinogen + H2O = hydroxymethylbilane + 4 NH4(+). The protein operates within porphyrin-containing compound metabolism; protoporphyrin-IX biosynthesis; coproporphyrinogen-III from 5-aminolevulinate: step 2/4. In terms of biological role, tetrapolymerization of the monopyrrole PBG into the hydroxymethylbilane pre-uroporphyrinogen in several discrete steps. This is Porphobilinogen deaminase from Staphylococcus saprophyticus subsp. saprophyticus (strain ATCC 15305 / DSM 20229 / NCIMB 8711 / NCTC 7292 / S-41).